The primary structure comprises 99 residues: C-C motif chemokine 17 (99 aa).

Positions 1–23 (MMSLKLLLLVMLLLGASLQVTHA) are cleaved as a signal peptide. 2 cysteine pairs are disulfide-bonded: cysteine 33/cysteine 57 and cysteine 34/cysteine 73.

This sequence belongs to the intercrine beta (chemokine CC) family. Expressed in thymus and also in spleen, lung, lymph node, kidney, small intestine, colon and skin.

Its subcellular location is the secreted. In terms of biological role, chemokine, which displays chemotactic activity for T lymphocytes, preferentially Th2 cells, but not monocytes or granulocytes. Therefore plays an important role in a wide range of inflammatory and immunological processes. Acts by binding to CCR4 at T-cell surface. Mediates GM-CSF/CSF2-driven pain and inflammation. In the brain, required to maintain the typical, highly branched morphology of hippocampal microglia under homeostatic conditions. May be important for the appropriate adaptation of microglial morphology and synaptic plasticity to acute lipopolysaccharide (LPS)-induced neuroinflammation. Plays a role in wound healing, mainly by inducing fibroblast migration into the wound. This chain is C-C motif chemokine 17 (CCL17), found in Felis catus (Cat).